A 310-amino-acid polypeptide reads, in one-letter code: Malate dehydrogenase (310 aa).

NAD(+)-binding positions include 7 to 12 and aspartate 32; that span reads GAGNVG. Substrate contacts are provided by arginine 81 and arginine 87. NAD(+) contacts are provided by residues asparagine 94 and 117 to 119; that span reads VSN. The substrate site is built by asparagine 119 and arginine 150. Residue histidine 174 is the Proton acceptor of the active site.

It belongs to the LDH/MDH superfamily. MDH type 3 family.

The enzyme catalyses (S)-malate + NAD(+) = oxaloacetate + NADH + H(+). In terms of biological role, catalyzes the reversible oxidation of malate to oxaloacetate. The chain is Malate dehydrogenase from Chlorobium chlorochromatii (strain CaD3).